We begin with the raw amino-acid sequence, 412 residues long: 1-deoxy-D-xylulose 5-phosphate reductoisomerase (412 aa).

Positions 10, 11, 12, 13, 36, 37, 38, and 130 each coordinate NADPH. Position 131 (lysine 131) interacts with 1-deoxy-D-xylulose 5-phosphate. Glutamate 132 provides a ligand contact to NADPH. Aspartate 156 provides a ligand contact to Mn(2+). Positions 157, 158, 194, and 217 each coordinate 1-deoxy-D-xylulose 5-phosphate. A Mn(2+)-binding site is contributed by glutamate 158. Glycine 223 provides a ligand contact to NADPH. The 1-deoxy-D-xylulose 5-phosphate site is built by serine 230, asparagine 235, lysine 236, and glutamate 239. Position 239 (glutamate 239) interacts with Mn(2+).

This sequence belongs to the DXR family. Requires Mg(2+) as cofactor. Mn(2+) is required as a cofactor.

It catalyses the reaction 2-C-methyl-D-erythritol 4-phosphate + NADP(+) = 1-deoxy-D-xylulose 5-phosphate + NADPH + H(+). Its pathway is isoprenoid biosynthesis; isopentenyl diphosphate biosynthesis via DXP pathway; isopentenyl diphosphate from 1-deoxy-D-xylulose 5-phosphate: step 1/6. In terms of biological role, catalyzes the NADPH-dependent rearrangement and reduction of 1-deoxy-D-xylulose-5-phosphate (DXP) to 2-C-methyl-D-erythritol 4-phosphate (MEP). In Prochlorococcus marinus (strain NATL1A), this protein is 1-deoxy-D-xylulose 5-phosphate reductoisomerase.